Consider the following 91-residue polypeptide: Large ribosomal subunit protein uL23c (91 aa).

This sequence belongs to the universal ribosomal protein uL23 family. In terms of assembly, part of the 50S ribosomal subunit.

The protein localises to the plastid. The protein resides in the chloroplast. Its function is as follows. Binds to 23S rRNA. In Pinus thunbergii (Japanese black pine), this protein is Large ribosomal subunit protein uL23c (rpl23).